Consider the following 261-residue polypeptide: Acetylglutamate kinase (261 aa).

Substrate-binding positions include 45 to 46, Arg67, and Asn162; that span reads GG.

This sequence belongs to the acetylglutamate kinase family. ArgB subfamily.

It is found in the cytoplasm. The catalysed reaction is N-acetyl-L-glutamate + ATP = N-acetyl-L-glutamyl 5-phosphate + ADP. It functions in the pathway amino-acid biosynthesis; L-arginine biosynthesis; N(2)-acetyl-L-ornithine from L-glutamate: step 2/4. In terms of biological role, catalyzes the ATP-dependent phosphorylation of N-acetyl-L-glutamate. The polypeptide is Acetylglutamate kinase (Bacteroides fragilis (strain ATCC 25285 / DSM 2151 / CCUG 4856 / JCM 11019 / LMG 10263 / NCTC 9343 / Onslow / VPI 2553 / EN-2)).